Here is a 664-residue protein sequence, read N- to C-terminus: ATP-dependent RNA helicase MSS116, mitochondrial (664 aa).

Residues 1 to 26 (MLTSILIKGRTPVLASRNLLAALSNC) constitute a mitochondrion transit peptide. The segment at 42–79 (NRDQRNFGRNQRNNNSNRYRNSRFNSRPRTRSREDDDE) is disordered. Low complexity predominate over residues 48–68 (FGRNQRNNNSNRYRNSRFNSR). Positions 106–134 (SLLEEGVLDKEIHKAITRMEFPGLTPVQQ) match the Q motif motif. The Helicase ATP-binding domain occupies 139-326 (PILSSEDHDV…NNIMNKKECL (188 aa)). 152–159 (AKTGTGKT) is an ATP binding site. A DEAD box motif is present at residues 267–270 (DEAD). Residues 355–512 (SIFAAVEHIK…EKYEPSEEIK (158 aa)) form the Helicase C-terminal domain. The tract at residues 602–664 (GNNKSYDYDD…NYSSRNSNIY (63 aa)) is disordered. Residues 628 to 638 (QNRDYDDEPFR) are compositionally biased toward basic and acidic residues. The segment covering 639-649 (RSNNNRRSFSR) has biased composition (low complexity). Residues 653–664 (KNNYSSRNSNIY) are compositionally biased toward polar residues.

Belongs to the DEAD box helicase family. DDX18/HAS1 subfamily.

Its subcellular location is the mitochondrion matrix. The catalysed reaction is ATP + H2O = ADP + phosphate + H(+). ATP-dependent RNA helicase required for mitochondrial splicing of group I and II introns. Specifically involved in the ATP-dependent splicing of the bl1 intron of COB. Also required for efficient mitochondrial translation. This is ATP-dependent RNA helicase MSS116, mitochondrial (MSS116) from Saccharomyces cerevisiae (strain ATCC 204508 / S288c) (Baker's yeast).